Reading from the N-terminus, the 120-residue chain is Large ribosomal subunit protein uL14 (120 aa).

This sequence belongs to the universal ribosomal protein uL14 family. As to quaternary structure, part of the 50S ribosomal subunit. Forms a cluster with proteins L3 and L19. In the 70S ribosome, L14 and L19 interact and together make contacts with the 16S rRNA in bridges B5 and B8.

Binds to 23S rRNA. Forms part of two intersubunit bridges in the 70S ribosome. This chain is Large ribosomal subunit protein uL14, found in Karelsulcia muelleri (strain GWSS) (Sulcia muelleri).